The sequence spans 244 residues: tRNA pseudouridine synthase A (244 aa).

Residue aspartate 52 is the Nucleophile of the active site. Residue tyrosine 111 participates in substrate binding.

The protein belongs to the tRNA pseudouridine synthase TruA family. Homodimer.

It carries out the reaction uridine(38/39/40) in tRNA = pseudouridine(38/39/40) in tRNA. Formation of pseudouridine at positions 38, 39 and 40 in the anticodon stem and loop of transfer RNAs. This Thermosipho africanus (strain TCF52B) protein is tRNA pseudouridine synthase A.